Here is a 380-residue protein sequence, read N- to C-terminus: Cytochrome b (380 aa).

4 helical membrane-spanning segments follow: residues 34–54 (FGSL…LLAM), 78–99 (WLIR…YLHI), 114–134 (WNTG…GYVL), and 179–199 (FFAL…IHLT). His-84 and His-98 together coordinate heme b. Residues His-183 and His-197 each coordinate heme b. An a ubiquinone-binding site is contributed by His-202. Transmembrane regions (helical) follow at residues 227–247 (TKDI…AMFA), 289–309 (LGGV…PFLH), 321–341 (LSQL…WIGS), and 348–368 (FIIT…ILFP).

The protein belongs to the cytochrome b family. In terms of assembly, the cytochrome bc1 complex contains 11 subunits: 3 respiratory subunits (MT-CYB, CYC1 and UQCRFS1), 2 core proteins (UQCRC1 and UQCRC2) and 6 low-molecular weight proteins (UQCRH/QCR6, UQCRB/QCR7, UQCRQ/QCR8, UQCR10/QCR9, UQCR11/QCR10 and a cleavage product of UQCRFS1). This cytochrome bc1 complex then forms a dimer. Heme b is required as a cofactor.

The protein resides in the mitochondrion inner membrane. Functionally, component of the ubiquinol-cytochrome c reductase complex (complex III or cytochrome b-c1 complex) that is part of the mitochondrial respiratory chain. The b-c1 complex mediates electron transfer from ubiquinol to cytochrome c. Contributes to the generation of a proton gradient across the mitochondrial membrane that is then used for ATP synthesis. This chain is Cytochrome b (MT-CYB), found in Aphanotriccus audax (Black-billed flycatcher).